The primary structure comprises 453 residues: Bifunctional protein GlmU (453 aa).

The pyrophosphorylase stretch occupies residues 1–225; the sequence is MNIVILAAGT…DWETLGVNSK (225 aa). UDP-N-acetyl-alpha-D-glucosamine-binding positions include 6-9, Lys20, Gln71, 76-77, 98-100, Gly135, Glu150, Asn165, and Asn223; these read LAAG, GT, and YGD. Asp100 contributes to the Mg(2+) binding site. Asn223 provides a ligand contact to Mg(2+). The interval 226–246 is linker; the sequence is AQLAELERIHQRNVADALLVE. Residues 247-453 form an N-acetyltransferase region; that stretch reads GVTLADPARV…GYVRPVKKKS (207 aa). 2 residues coordinate UDP-N-acetyl-alpha-D-glucosamine: Arg329 and Lys347. The Proton acceptor role is filled by His359. 2 residues coordinate UDP-N-acetyl-alpha-D-glucosamine: Tyr362 and Asn373. Acetyl-CoA is bound by residues Ala376, 382 to 383, Ser401, and Ala419; that span reads NY.

It in the N-terminal section; belongs to the N-acetylglucosamine-1-phosphate uridyltransferase family. This sequence in the C-terminal section; belongs to the transferase hexapeptide repeat family. In terms of assembly, homotrimer. Requires Mg(2+) as cofactor.

It localises to the cytoplasm. The catalysed reaction is alpha-D-glucosamine 1-phosphate + acetyl-CoA = N-acetyl-alpha-D-glucosamine 1-phosphate + CoA + H(+). It catalyses the reaction N-acetyl-alpha-D-glucosamine 1-phosphate + UTP + H(+) = UDP-N-acetyl-alpha-D-glucosamine + diphosphate. It functions in the pathway nucleotide-sugar biosynthesis; UDP-N-acetyl-alpha-D-glucosamine biosynthesis; N-acetyl-alpha-D-glucosamine 1-phosphate from alpha-D-glucosamine 6-phosphate (route II): step 2/2. It participates in nucleotide-sugar biosynthesis; UDP-N-acetyl-alpha-D-glucosamine biosynthesis; UDP-N-acetyl-alpha-D-glucosamine from N-acetyl-alpha-D-glucosamine 1-phosphate: step 1/1. The protein operates within bacterial outer membrane biogenesis; LPS lipid A biosynthesis. In terms of biological role, catalyzes the last two sequential reactions in the de novo biosynthetic pathway for UDP-N-acetylglucosamine (UDP-GlcNAc). The C-terminal domain catalyzes the transfer of acetyl group from acetyl coenzyme A to glucosamine-1-phosphate (GlcN-1-P) to produce N-acetylglucosamine-1-phosphate (GlcNAc-1-P), which is converted into UDP-GlcNAc by the transfer of uridine 5-monophosphate (from uridine 5-triphosphate), a reaction catalyzed by the N-terminal domain. This Burkholderia vietnamiensis (strain G4 / LMG 22486) (Burkholderia cepacia (strain R1808)) protein is Bifunctional protein GlmU.